Here is a 228-residue protein sequence, read N- to C-terminus: Small ribosomal subunit protein uS3 (228 aa).

The KH type-2 domain occupies 39–107; sequence TREYLQDKLK…PVHINIEEIR (69 aa).

Belongs to the universal ribosomal protein uS3 family. Part of the 30S ribosomal subunit. Forms a tight complex with proteins S10 and S14.

Its function is as follows. Binds the lower part of the 30S subunit head. Binds mRNA in the 70S ribosome, positioning it for translation. The chain is Small ribosomal subunit protein uS3 from Pseudomonas putida (strain ATCC 700007 / DSM 6899 / JCM 31910 / BCRC 17059 / LMG 24140 / F1).